We begin with the raw amino-acid sequence, 209 residues long: Probable GTP-binding protein EngB (209 aa).

The EngB-type G domain maps to 23 to 198 (NGAEIAFAGR…EKVVAGWLVP (176 aa)). GTP-binding positions include 31 to 38 (GRSNAGKS), 58 to 62 (GRTQL), 76 to 79 (DLPG), 143 to 146 (TKSD), and 177 to 179 (FSS). S38 and T60 together coordinate Mg(2+).

The protein belongs to the TRAFAC class TrmE-Era-EngA-EngB-Septin-like GTPase superfamily. EngB GTPase family. Mg(2+) is required as a cofactor.

Necessary for normal cell division and for the maintenance of normal septation. In Azoarcus sp. (strain BH72), this protein is Probable GTP-binding protein EngB.